The chain runs to 186 residues: UPF0340 protein SEQ_1951 (186 aa).

It belongs to the UPF0340 family.

This is UPF0340 protein SEQ_1951 from Streptococcus equi subsp. equi (strain 4047).